The primary structure comprises 128 residues: Sulfurtransferase TusD (128 aa).

The Cysteine persulfide intermediate role is filled by Cys78.

Belongs to the DsrE/TusD family. As to quaternary structure, heterohexamer, formed by a dimer of trimers. The hexameric TusBCD complex contains 2 copies each of TusB, TusC and TusD. The TusBCD complex interacts with TusE.

It is found in the cytoplasm. Functionally, part of a sulfur-relay system required for 2-thiolation of 5-methylaminomethyl-2-thiouridine (mnm(5)s(2)U) at tRNA wobble positions. Accepts sulfur from TusA and transfers it in turn to TusE. In Escherichia coli (strain 55989 / EAEC), this protein is Sulfurtransferase TusD.